The primary structure comprises 188 residues: Elongation factor P (188 aa).

Belongs to the elongation factor P family.

Its subcellular location is the cytoplasm. It functions in the pathway protein biosynthesis; polypeptide chain elongation. Involved in peptide bond synthesis. Stimulates efficient translation and peptide-bond synthesis on native or reconstituted 70S ribosomes in vitro. Probably functions indirectly by altering the affinity of the ribosome for aminoacyl-tRNA, thus increasing their reactivity as acceptors for peptidyl transferase. The polypeptide is Elongation factor P (Wolbachia sp. subsp. Drosophila simulans (strain wRi)).